The primary structure comprises 400 residues: Formate-dependent phosphoribosylglycinamide formyltransferase (400 aa).

N(1)-(5-phospho-beta-D-ribosyl)glycinamide-binding positions include 22–23 (EL) and Glu82. Residues Arg115, Lys156, 161 to 166 (SSGKGQ), 196 to 199 (EGFI), and Glu204 contribute to the ATP site. Residues 120-309 (RLAAETLGLP…EFALHARAIL (190 aa)) form the ATP-grasp domain. Positions 268 and 280 each coordinate Mg(2+). N(1)-(5-phospho-beta-D-ribosyl)glycinamide is bound by residues Asp287, Lys361, and 368–369 (RR).

The protein belongs to the PurK/PurT family. Homodimer.

It catalyses the reaction N(1)-(5-phospho-beta-D-ribosyl)glycinamide + formate + ATP = N(2)-formyl-N(1)-(5-phospho-beta-D-ribosyl)glycinamide + ADP + phosphate + H(+). The protein operates within purine metabolism; IMP biosynthesis via de novo pathway; N(2)-formyl-N(1)-(5-phospho-D-ribosyl)glycinamide from N(1)-(5-phospho-D-ribosyl)glycinamide (formate route): step 1/1. Functionally, involved in the de novo purine biosynthesis. Catalyzes the transfer of formate to 5-phospho-ribosyl-glycinamide (GAR), producing 5-phospho-ribosyl-N-formylglycinamide (FGAR). Formate is provided by PurU via hydrolysis of 10-formyl-tetrahydrofolate. The sequence is that of Formate-dependent phosphoribosylglycinamide formyltransferase from Xanthomonas campestris pv. campestris (strain 8004).